A 211-amino-acid chain; its full sequence is Imidazole glycerol phosphate synthase subunit HisH (211 aa).

The Glutamine amidotransferase type-1 domain maps to 1–206 (MIGIIDYGRG…GKWVNEDATV (206 aa)). The Nucleophile role is filled by cysteine 79. Active-site residues include histidine 181 and glutamate 183.

As to quaternary structure, heterodimer of HisH and HisF.

The protein localises to the cytoplasm. It catalyses the reaction 5-[(5-phospho-1-deoxy-D-ribulos-1-ylimino)methylamino]-1-(5-phospho-beta-D-ribosyl)imidazole-4-carboxamide + L-glutamine = D-erythro-1-(imidazol-4-yl)glycerol 3-phosphate + 5-amino-1-(5-phospho-beta-D-ribosyl)imidazole-4-carboxamide + L-glutamate + H(+). It carries out the reaction L-glutamine + H2O = L-glutamate + NH4(+). It functions in the pathway amino-acid biosynthesis; L-histidine biosynthesis; L-histidine from 5-phospho-alpha-D-ribose 1-diphosphate: step 5/9. Functionally, IGPS catalyzes the conversion of PRFAR and glutamine to IGP, AICAR and glutamate. The HisH subunit catalyzes the hydrolysis of glutamine to glutamate and ammonia as part of the synthesis of IGP and AICAR. The resulting ammonia molecule is channeled to the active site of HisF. The chain is Imidazole glycerol phosphate synthase subunit HisH from Desulfitobacterium hafniense (strain DSM 10664 / DCB-2).